We begin with the raw amino-acid sequence, 484 residues long: Sperm motility kinase 2B (484 aa).

Residues 8–256 (YVMLETIGHG…VAEVMVHPWV (249 aa)) form the Protein kinase domain. ATP contacts are provided by residues 14–22 (IGHGGCSKV) and lysine 37. Residue aspartate 127 is the Proton acceptor of the active site. The 43-residue stretch at 272–314 (PLKPNPAIVKAMGYIGFQAQDIEDSLRQRKFNETMASYCLLKK) folds into the UBA domain. Polar residues-rich tracts occupy residues 356-373 (PTSL…CGRS) and 422-434 (SSDD…TSAS). Disordered stretches follow at residues 356 to 400 (PTSL…TMDH) and 422 to 450 (SSDD…RGIK).

The protein belongs to the protein kinase superfamily. CAMK Ser/Thr protein kinase family. Smok subfamily. Testis-specific. Expressed in the testis from 22 days postpartum (22 dpp).

It catalyses the reaction L-seryl-[protein] + ATP = O-phospho-L-seryl-[protein] + ADP + H(+). The catalysed reaction is L-threonyl-[protein] + ATP = O-phospho-L-threonyl-[protein] + ADP + H(+). Its function is as follows. May play a role in sperm motility, especially in the regulation of flagellar function. This Mus musculus (Mouse) protein is Sperm motility kinase 2B.